A 1407-amino-acid chain; its full sequence is DNA-directed RNA polymerase subunit beta' (1407 aa).

4 residues coordinate Zn(2+): C70, C72, C85, and C88. Positions 460, 462, and 464 each coordinate Mg(2+). Residues C814, C888, C895, and C898 each contribute to the Zn(2+) site.

This sequence belongs to the RNA polymerase beta' chain family. The RNAP catalytic core consists of 2 alpha, 1 beta, 1 beta' and 1 omega subunit. When a sigma factor is associated with the core the holoenzyme is formed, which can initiate transcription. It depends on Mg(2+) as a cofactor. Requires Zn(2+) as cofactor.

The catalysed reaction is RNA(n) + a ribonucleoside 5'-triphosphate = RNA(n+1) + diphosphate. Its function is as follows. DNA-dependent RNA polymerase catalyzes the transcription of DNA into RNA using the four ribonucleoside triphosphates as substrates. The polypeptide is DNA-directed RNA polymerase subunit beta' (Pectobacterium atrosepticum (strain SCRI 1043 / ATCC BAA-672) (Erwinia carotovora subsp. atroseptica)).